The chain runs to 263 residues: Small ribosomal subunit protein eS4 (263 aa).

Residues 42-104 (LPLIIFLRNR…TGENFRLIYD (63 aa)) enclose the S4 RNA-binding domain.

It belongs to the eukaryotic ribosomal protein eS4 family.

This is Small ribosomal subunit protein eS4 (rps4) from Ictalurus punctatus (Channel catfish).